We begin with the raw amino-acid sequence, 29 residues long: Brevinin-2Ed (29 aa).

C23 and C29 are disulfide-bonded.

Belongs to the frog skin active peptide (FSAP) family. Brevinin subfamily. Expressed by the skin glands.

It localises to the secreted. Functionally, shows antibacterial activity against representative Gram-negative and Gram-positive bacterial species, and hemolytic activity. This chain is Brevinin-2Ed, found in Pelophylax lessonae (Pool frog).